A 50-amino-acid polypeptide reads, in one-letter code: MGSPEKLRPSDFSKSFLISSIRFAMSFSSFELYSACSSLIRVSSPTMAET.

This is an uncharacterized protein from Bacillus subtilis (Bacteriophage phi-105).